Consider the following 825-residue polypeptide: Neuroligin-3 (825 aa).

The N-terminal stretch at 1-34 is a signal peptide; it reads MWLQPSLSLSPTPTVGRSLCLTLGFLSLVLRAST. Topologically, residues 35–686 are extracellular; sequence QAPAPTVNTH…NPRDYSTELS (652 aa). N-linked (GlcNAc...) asparagine glycosylation is present at Asn95. A disulfide bond links Cys103 and Cys138. The interval 151–172 is disordered; sequence SGAKKQGEDLADNDGDEDEDIR. Over residues 159 to 171 the composition is skewed to acidic residues; that stretch reads DLADNDGDEDEDI. Cystine bridges form between Cys317–Cys328 and Cys487–Cys521. Asn522 carries an N-linked (GlcNAc...) asparagine glycan. 2 stretches are compositionally biased toward polar residues: residues 622–633 and 654–666; these read TKVPPPDTTHSS and AYSN…SWNG. The disordered stretch occupies residues 622 to 668; that stretch reads TKVPPPDTTHSSHITRRPNGKTWSTKRPAISPAYSNENAPGSWNGDQ. Residues 687-707 form a helical membrane-spanning segment; the sequence is VTIAVGASLLFLNVLAFAALY. At 708–825 the chain is on the cytoplasmic side; it reads YRKDKRRQEP…LPHSHSTTRV (118 aa). Ser722 is subject to Phosphoserine. Tyr769 carries the phosphotyrosine modification.

Belongs to the type-B carboxylesterase/lipase family. In terms of assembly, homodimer, and heterodimer with NLGN1 and NLGN2. Interacts with neurexins NRXN1, NRXN2 and NRXN3. Interaction with neurexins is mediated by heparan sulfate glycan modification on neurexin. Interacts (via its C-terminus) with DLG4/PSD-95 (via PDZ domain 3). As to expression, brain and arteries (at protein level). Detected in heart, brain, spleen, lung, liver, skeletal muscle, kidney and testis. Expressed in olfactory bulb and olfactory epithelium. Found in olfactory ensheathing glia but not in olfactory neurons, and in developing peripheral glia.

The protein resides in the cell membrane. The protein localises to the synapse. Its function is as follows. Cell surface protein involved in cell-cell-interactions via its interactions with neurexin family members. Plays a role in synapse function and synaptic signal transmission, and probably mediates its effects by recruiting and clustering other synaptic proteins. May promote the initial formation of synapses, but is not essential for this. May also play a role in glia-glia or glia-neuron interactions in the developing peripheral nervous system. This chain is Neuroligin-3 (Nlgn3), found in Mus musculus (Mouse).